Reading from the N-terminus, the 687-residue chain is Ribosomal RNA processing protein 1 homolog (687 aa).

A compositionally biased stretch (acidic residues) spans 288 to 298; that stretch reads DEEDDEVNAEE. Disordered regions lie at residues 288 to 312 and 463 to 624; these read DEED…RAGN and VKEA…GSGK. Basic and acidic residues-rich tracts occupy residues 463–488, 497–520, and 527–543; these read VKEA…DQTK, PKND…EEPA, and HSKT…DEQP. A compositionally biased stretch (low complexity) spans 554–564; that stretch reads KAKPTPKTKAA. Positions 596–608 are enriched in polar residues; that stretch reads KQANSKLPQSTPK. A phosphothreonine mark is found at T617 and T620. Residue S622 is modified to Phosphoserine.

Belongs to the RRP1 family.

The protein localises to the nucleus. In terms of biological role, may be involved in the generation of 28S rRNA. The chain is Ribosomal RNA processing protein 1 homolog (Nnp-1) from Drosophila melanogaster (Fruit fly).